Here is a 575-residue protein sequence, read N- to C-terminus: Chaperonin 60 subunit alpha 2, chloroplastic (575 aa).

Over residues Met-1–Arg-18 the composition is skewed to low complexity. Positions Met-1–Lys-27 are disordered. Residues Met-1–Arg-32 constitute a chloroplast transit peptide.

The protein belongs to the chaperonin (HSP60) family. As to quaternary structure, part of the Cpn60 complex composed of 7 alpha and 7 beta subunits.

The protein resides in the plastid. Its subcellular location is the chloroplast. Involved in protein assisted folding. This Arabidopsis thaliana (Mouse-ear cress) protein is Chaperonin 60 subunit alpha 2, chloroplastic (CPN60A2).